We begin with the raw amino-acid sequence, 164 residues long: Sec-independent protein translocase protein TatB (164 aa).

Residues 1-21 (MIDIGLSKMALIGAVALIVIG) form a helical membrane-spanning segment. The disordered stretch occupies residues 81–102 (ASEFQKDWESGTSDAAATGHDG).

This sequence belongs to the TatB family. The Tat system comprises two distinct complexes: a TatABC complex, containing multiple copies of TatA, TatB and TatC subunits, and a separate TatA complex, containing only TatA subunits. Substrates initially bind to the TatABC complex, which probably triggers association of the separate TatA complex to form the active translocon.

It is found in the cell inner membrane. Its function is as follows. Part of the twin-arginine translocation (Tat) system that transports large folded proteins containing a characteristic twin-arginine motif in their signal peptide across membranes. Together with TatC, TatB is part of a receptor directly interacting with Tat signal peptides. TatB may form an oligomeric binding site that transiently accommodates folded Tat precursor proteins before their translocation. The sequence is that of Sec-independent protein translocase protein TatB from Paracidovorax citrulli (strain AAC00-1) (Acidovorax citrulli).